A 473-amino-acid chain; its full sequence is Photosystem II CP43 reaction center protein (473 aa).

The propeptide occupies 1–14 (MKNLYSLRRFYHVE). The residue at position 15 (Thr15) is an N-acetylthreonine. Thr15 is subject to Phosphothreonine. 5 helical membrane passes run 69–93 (LFEV…PHLA), 134–155 (LVGP…KDKN), 178–200 (KAMY…RIIS), 255–275 (KPWA…LSYS), and 291–312 (WFNT…ASQS). [CaMn4O5] cluster is bound at residue Glu367. A helical membrane pass occupies residues 447–471 (RARAAAAGFEKGIDRDNEPVLSMRP).

This sequence belongs to the PsbB/PsbC family. PsbC subfamily. In terms of assembly, PSII is composed of 1 copy each of membrane proteins PsbA, PsbB, PsbC, PsbD, PsbE, PsbF, PsbH, PsbI, PsbJ, PsbK, PsbL, PsbM, PsbT, PsbX, PsbY, PsbZ, Psb30/Ycf12, at least 3 peripheral proteins of the oxygen-evolving complex and a large number of cofactors. It forms dimeric complexes. Requires Binds multiple chlorophylls and provides some of the ligands for the Ca-4Mn-5O cluster of the oxygen-evolving complex. It may also provide a ligand for a Cl- that is required for oxygen evolution. PSII binds additional chlorophylls, carotenoids and specific lipids. as cofactor.

It is found in the plastid. The protein localises to the chloroplast thylakoid membrane. Its function is as follows. One of the components of the core complex of photosystem II (PSII). It binds chlorophyll and helps catalyze the primary light-induced photochemical processes of PSII. PSII is a light-driven water:plastoquinone oxidoreductase, using light energy to abstract electrons from H(2)O, generating O(2) and a proton gradient subsequently used for ATP formation. This chain is Photosystem II CP43 reaction center protein, found in Chlorella vulgaris (Green alga).